Consider the following 485-residue polypeptide: Pumilio domain-containing protein 6 (485 aa).

Disordered stretches follow at residues 29 to 48 (NKTHKNKNPKPPVKLLPYRH) and 55 to 76 (SDLDNYIFNSGSGSSDDETPPP). Positions 55–68 (SDLDNYIFNSGSGS) are enriched in polar residues. Pumilio repeat units follow at residues 86-124 (EVLLNGLLIDFAIDPSGVKFLEANYPLDSEDQIRKAVFE), 125-163 (KLTESTTLFVGLCHSRNGNFIVQKLVELATPAEQRELLR), 164-200 (QMIDGGLLVMCKDKFACRVVQLALQKFDHSNVFQLIQ), 201-236 (ELSTFDLAAMCTDQISIHVIQRVVKQLPVDMWTFFV), 237-279 (HFLS…FRIQ), 287-324 (CIVRNCYRLSSNEFANYVIQYVIKSSGIMEMYRDTIID), 326-361 (CLLRNLLSMSQDKYASHVIEGAFLFAPPALLHEMME), and 372-411 (ELNRDALDILLFHQYGNYVVQQMISICTAALIGKEERQLP). The segment at 439–454 (FSSGKKIIDSVMRHGV) is RNA-binding.

Functionally, RNA-binding protein that binds to the consensus sequence 5'-CUCUGUAUCUUGU-3' in mRNA 3'-UTRs and modulates mRNA expression and stability. Functions redundantly with puf-5 and puf-7 in oocyte formation and organization, early embryonic cell divisions, and repression of expression of glp-1 and other maternal mRNAs in late oogenesis. In Caenorhabditis elegans, this protein is Pumilio domain-containing protein 6.